We begin with the raw amino-acid sequence, 337 residues long: Neurogenic differentiation factor 6 (337 aa).

The interval 28–80 (QKQIKKPESFPKQVVLRGKSIKRAPGEETEKEEEEEDREEEDENGLSRRRGLR) is disordered. Acidic residues predominate over residues 54-71 (EETEKEEEEEDREEEDEN). A Nuclear localization signal motif is present at residues 80 to 86 (RKKKTTK). Positions 94-146 (FRRQEANARERNRMHGLNDALDNLRKVVPCYSKTQKLSKIETLRLAKNYIWAL) constitute a bHLH domain.

Efficient DNA binding requires dimerization with another bHLH protein. In terms of tissue distribution, specific to the nervous system of both embryos and adults. Highest levels in the cortical plate of the cerebrum.

It is found in the nucleus. Activates E box-dependent transcription in collaboration with TCF3/E47. May be a trans-acting factor involved in the development and maintenance of the mammalian nervous system. Transactivates the promoter of its own gene. This chain is Neurogenic differentiation factor 6 (Neurod6), found in Mus musculus (Mouse).